Consider the following 105-residue polypeptide: Met repressor (105 aa).

The protein belongs to the MetJ family. Homodimer.

The protein resides in the cytoplasm. Functionally, this regulatory protein, when combined with SAM (S-adenosylmethionine) represses the expression of the methionine regulon and of enzymes involved in SAM synthesis. This Yersinia enterocolitica serotype O:8 / biotype 1B (strain NCTC 13174 / 8081) protein is Met repressor.